The sequence spans 474 residues: Glycogen synthase (474 aa).

Residue K15 coordinates ADP-alpha-D-glucose.

Belongs to the glycosyltransferase 1 family. Bacterial/plant glycogen synthase subfamily.

It carries out the reaction [(1-&gt;4)-alpha-D-glucosyl](n) + ADP-alpha-D-glucose = [(1-&gt;4)-alpha-D-glucosyl](n+1) + ADP + H(+). Its pathway is glycan biosynthesis; glycogen biosynthesis. Functionally, synthesizes alpha-1,4-glucan chains using ADP-glucose. This is Glycogen synthase from Chlamydia trachomatis serovar L2b (strain UCH-1/proctitis).